Here is a 208-residue protein sequence, read N- to C-terminus: Small ribosomal subunit protein uS4 (208 aa).

The region spanning 98-161 is the S4 RNA-binding domain; it reads QRLDNVVYRM…KTNSQILRAI (64 aa).

The protein belongs to the universal ribosomal protein uS4 family. In terms of assembly, part of the 30S ribosomal subunit. Contacts protein S5. The interaction surface between S4 and S5 is involved in control of translational fidelity.

One of the primary rRNA binding proteins, it binds directly to 16S rRNA where it nucleates assembly of the body of the 30S subunit. Functionally, with S5 and S12 plays an important role in translational accuracy. The polypeptide is Small ribosomal subunit protein uS4 (Sulfurovum sp. (strain NBC37-1)).